The sequence spans 448 residues: Probable glycine dehydrogenase (decarboxylating) subunit 1 (448 aa).

Belongs to the GcvP family. N-terminal subunit subfamily. The glycine cleavage system is composed of four proteins: P, T, L and H. In this organism, the P 'protein' is a heterodimer of two subunits.

It carries out the reaction N(6)-[(R)-lipoyl]-L-lysyl-[glycine-cleavage complex H protein] + glycine + H(+) = N(6)-[(R)-S(8)-aminomethyldihydrolipoyl]-L-lysyl-[glycine-cleavage complex H protein] + CO2. Functionally, the glycine cleavage system catalyzes the degradation of glycine. The P protein binds the alpha-amino group of glycine through its pyridoxal phosphate cofactor; CO(2) is released and the remaining methylamine moiety is then transferred to the lipoamide cofactor of the H protein. The protein is Probable glycine dehydrogenase (decarboxylating) subunit 1 of Lysinibacillus sphaericus (strain C3-41).